A 110-amino-acid chain; its full sequence is Large ribosomal subunit protein mL60 (110 aa).

It belongs to the mitochondrion-specific ribosomal protein mL60 family. Component of the mitochondrial large ribosomal subunit (mt-LSU). Mature N.crassa 74S mitochondrial ribosomes consist of a small (37S) and a large (54S) subunit. The 37S small subunit contains a 16S ribosomal RNA (16S mt-rRNA) and 32 different proteins. The 54S large subunit contains a 23S rRNA (23S mt-rRNA) and 42 different proteins.

The protein localises to the mitochondrion. Component of the mitochondrial ribosome (mitoribosome), a dedicated translation machinery responsible for the synthesis of mitochondrial genome-encoded proteins, including at least some of the essential transmembrane subunits of the mitochondrial respiratory chain. The mitoribosomes are attached to the mitochondrial inner membrane and translation products are cotranslationally integrated into the membrane. The polypeptide is Large ribosomal subunit protein mL60 (mrpl31) (Neurospora crassa (strain ATCC 24698 / 74-OR23-1A / CBS 708.71 / DSM 1257 / FGSC 987)).